The following is a 947-amino-acid chain: Protein RRC1-like (947 aa).

A compositionally biased stretch (basic and acidic residues) spans 1–11 (MVKDEFFLDHP). Disordered stretches follow at residues 1 to 35 (MVKDEFFLDHPGRKHRSRNTEKKKKPRRRERRMKQ) and 63 to 167 (PNDN…DELP). Positions 12–34 (GRKHRSRNTEKKKKPRRRERRMK) are enriched in basic residues. 2 stretches are compositionally biased toward basic and acidic residues: residues 66-84 (NKLKPDSQGEKSRDGDSIS) and 104-155 (KGPE…DHNS). The RRM domain occupies 187–268 (TNLYVVNLSS…YELKIGWGKV (82 aa)). An SURP motif repeat occupies 336-379 (IIDTMALNVLDGGCAFEQAIMERGRGNPLFNFLFELGSKEHTYY). Positions 412 to 434 (PPLPATRSPEHGKESRGTYAAGK) are disordered. Residues 444-589 (LTDSQRDEFE…GLRATFLRSR (146 aa)) enclose the CID domain. Residues 638 to 672 (LMNRPISELERRCRHNGLSLLGGREMMVARLVCLK) form the SAP domain. Disordered regions lie at residues 752–797 (REDD…PENE) and 846–947 (GLSG…RGMR). Basic and acidic residues-rich tracts occupy residues 854–876 (LPEKREKREDSRDSSRKRNRSES), 888–916 (LTRERVRDHDLDKDRHRDRDRQQHDLDKD), and 924–947 (SSRERDDHDRSRERDRDWRRRGMR).

In terms of tissue distribution, expressed in leaves, inflorescence stems, roots, flower buds, open flowers and siliques.

In terms of biological role, probable SR-like splicing factor. The protein is Protein RRC1-like of Arabidopsis thaliana (Mouse-ear cress).